The primary structure comprises 60 residues: Mastoparan-VT6 (60 aa).

The N-terminal stretch at 1-27 (MKNTILILFTAFIALLGFFGMSAEALA) is a signal peptide. AXPX repeat units follow at residues 27–30 (ADPK), 31–34 (ADPL), 35–38 (AGPN), and 41–44 (ADPE). Positions 28–45 (DPKADPLAGPNPDADPEA) are excised as a propeptide. L59 bears the Leucine amide mark.

This sequence belongs to the MCD family. Mastoparan subfamily. In terms of tissue distribution, expressed by the venom gland.

The protein localises to the secreted. Functionally, the synthetic peptide shows antimicrobial activities against Gram-negative bacteria (but not against all strains tested), Gram-positive bacteria (all strains tested) and the fungi C.albicans and C.parapsilosis. Exhibits little hemolytic activity against washed human erythrocytes. This is Mastoparan-VT6 from Vespa tropica (Greater banded hornet).